The chain runs to 336 residues: Transcription factor MYB29 (336 aa).

HTH myb-type domains lie at 9 to 65 (GEGL…KPDI) and 66 to 116 (KRGE…KKLL). 2 consecutive DNA-binding regions (H-T-H motif) follow at residues 37–61 (WRDI…ANYL) and 89–112 (WSVI…NTHL). Residues 127–170 (KPLAYDSNPDEQSQSGSISPKSLPPSSSKNVPEITSSDETPKYD) are disordered. The segment covering 141 to 154 (SGSISPKSLPPSSS) has biased composition (low complexity). Residues 155-164 (KNVPEITSSD) show a composition bias toward polar residues.

As to quaternary structure, can form complexes with MYC2, MYC3 or MYC4. As to expression, expressed in both vegetative and generative organs. Mostly present in seedlings, inflorescences, roots and stems, and, to a lower extent, in leaves (in midvein and trichomes) and siliques.

It localises to the nucleus. In terms of biological role, plays a minor rheostat role in aliphatic glucosinolates (GLSs) biosynthesis, mostly short chained. Together with MYB28/HAG1 and MYB76/HAG2, promotes aliphatic glucosinolate biosynthesis but represses indolic glucosinolate biosynthesis. Prevents insect performance (e.g. lepidopteran insect Mamestra brassicae) by promoting glucosinolates. The sequence is that of Transcription factor MYB29 (MYB29) from Arabidopsis thaliana (Mouse-ear cress).